A 1304-amino-acid chain; its full sequence is Myosin-1 (1304 aa).

The segment covering 1 to 12 has biased composition (basic residues); the sequence is MAIVKRGVRTKN. The segment at 1 to 24 is disordered; the sequence is MAIVKRGVRTKNKQSQQPSKSGIK. One can recognise a Myosin motor domain in the interval 36-730; the sequence is VGVSDLTLLS…TLFALEDMRD (695 aa). Residue 129–136 participates in ATP binding; sequence GESGAGKT. Ser364 carries the phosphoserine modification. Residues 413–496 are actin-binding; the sequence is SIGILDIYGF…PGLFAALNDS (84 aa). 2 IQ domains span residues 734–754 and 755–780; these read HNMA…KDDA and ARLI…YGNG. Residues 788–978 enclose the TH1 domain; sequence RRRMSMLGSR…TVTVRQGLPG (191 aa). Disordered regions lie at residues 963–1162 and 1214–1304; these read DSYK…TYKA and ECDP…DDDW. Polar residues-rich tracts occupy residues 964 to 983 and 1001 to 1012; these read SYKS…SQNP and RGSNMRSTSSYQ. Low complexity-rich tracts occupy residues 1029-1052, 1072-1096, and 1120-1140; these read QPPV…PQAQ, QPHA…PQAQ, and PSAP…KKNV. A compositionally biased stretch (pro residues) spans 1141–1156; the sequence is APPPPPAAASPPPKPK. Residues 1155–1217 enclose the SH3 domain; the sequence is PKFPTYKAAY…PAAYVVECDP (63 aa). Low complexity-rich tracts occupy residues 1217–1227 and 1236–1256; these read PPANSPAGNAK and LNSA…NGAG. Positions 1292–1304 are enriched in acidic residues; sequence DSDEEDEEDDDDW.

This sequence belongs to the TRAFAC class myosin-kinesin ATPase superfamily. Myosin family. Post-translationally, phosphorylation of the TEDS site (Ser-364) is required for the polarization of the actin cytoskeleton. Phosphorylation probably activates the myosin-I ATPase activity.

It is found in the cytoplasm. It localises to the cytoskeleton. The protein localises to the actin patch. In terms of biological role, type-I myosin implicated in the organization of the actin cytoskeleton. Required for proper actin cytoskeleton polarization. At the cell cortex, assembles in patch-like structures together with proteins from the actin-polymerizing machinery and promotes actin assembly. Functions as actin nucleation-promoting factor (NPF) for the Arp2/3 complex. The polypeptide is Myosin-1 (MYO1) (Debaryomyces hansenii (strain ATCC 36239 / CBS 767 / BCRC 21394 / JCM 1990 / NBRC 0083 / IGC 2968) (Yeast)).